The following is a 353-amino-acid chain: Melatonin receptor type 1A (353 aa).

Topologically, residues 1–32 (MKGNVSELLNATQQAPGGGEGGRPRPSWLAST) are extracellular. 2 N-linked (GlcNAc...) asparagine glycosylation sites follow: N4 and N10. Residues 33–53 (LAFILIFTIVVDILGNLLVIL) traverse the membrane as a helical segment. The Cytoplasmic segment spans residues 54–66 (SVYRNKKLRNSGN). Residues 67–87 (IFVVSLAVADLVVAVYPYPLV) form a helical membrane-spanning segment. The Extracellular segment spans residues 88–105 (LTSILNNGWNLGYLHCQV). A disulfide bond links C103 and C180. A helical transmembrane segment spans residues 106–126 (SAFLMGLSVIGSIFNITGIAM). The Cytoplasmic segment spans residues 127–145 (NRYCYICHSLKYDKIYSNK). The chain crosses the membrane as a helical span at residues 146 to 166 (NSLCYVFLIWMLTLIAIMPNL). At 167–190 (QTGTLQYDPRIYSCTFTQSVSSAY) the chain is on the extracellular side. Residues 191-211 (TIAVVVFHFIVPMIIVIFCYL) traverse the membrane as a helical segment. The Cytoplasmic segment spans residues 212-243 (RIWVLVLQVRRRVKPDNKPKLKPQDFRNFVTM). Residues 244–264 (FVVFVLFAICWAPLNLIGLIV) traverse the membrane as a helical segment. At 265 to 277 (ASDPATMVPRIPE) the chain is on the extracellular side. A helical transmembrane segment spans residues 278–298 (WLFVASYYLAYFNSCLNAIIY). Over 299–353 (GLLNQNFRKEYKKIIVSLCTAKMFFVESSNEEADKIKCKPSPLIPNNNLIKVDSV) the chain is Cytoplasmic.

Belongs to the G-protein coupled receptor 1 family.

The protein localises to the cell membrane. High affinity receptor for melatonin. Likely to mediate the reproductive and circadian actions of melatonin. The activity of this receptor is mediated by pertussis toxin sensitive G proteins that inhibit adenylate cyclase activity. Possibly involved in sleep induction, by melatonin activation of the potassium channel KCNMA1/BK and the dissociation of G-beta and G-gamma subunits, thereby decreasing synaptic transmission. In Mus musculus (Mouse), this protein is Melatonin receptor type 1A (Mtnr1a).